An 823-amino-acid polypeptide reads, in one-letter code: Dolichyl-diphosphooligosaccharide--protein glycosyltransferase subunit STT3B (823 aa).

Residues 1–58 (MAEPSAPESKHKSSLNSSPWSGLMALGNSRHGHHGPGTQSASSAAAPKPGPPAGLSGG) are disordered. The residue at position 2 (Ala2) is an N-acetylalanine. Residues 2–41 (AEPSAPESKHKSSLNSSPWSGLMALGNSRHGHHGPGTQSA) lie on the Cytoplasmic side of the membrane. 3 positions are modified to phosphoserine: Ser13, Ser18, and Ser29. Residues 42–83 (SSAAAPKPGPPAGLSGGLSQPAGWQSLLSFTILFLAWLAGFS) traverse the membrane as a helical segment. Residues 84-170 (SRLFAVIRFE…VHIRDVCVFL (87 aa)) lie on the Lumenal side of the membrane. The short motif at 98 to 100 (EFD) is the DXD motif 1 element. Mn(2+) is bound at residue Asp100. Residues 171-189 (APTFSGLTSISTFLLTREL) form a helical membrane-spanning segment. The Cytoplasmic segment spans residues 190 to 191 (WN). Residues 192–209 (QGAGLLAACFIAIVPGYI) traverse the membrane as a helical segment. The Lumenal portion of the chain corresponds to 210-220 (SRSVAGSFDNE). 2 residues coordinate Mn(2+): Asp218 and Glu220. The DXD motif 2 signature appears at 218 to 220 (DNE). The helical transmembrane segment at 221-240 (GIAIFALQFTYYLWVKSVKT) threads the bilayer. At 241-242 (GS) the chain is on the cytoplasmic side. Residues 243-257 (VFWTMCCCLSYFYMV) traverse the membrane as a helical segment. Over 258–262 (SAWGG) the chain is Lumenal. The helical transmembrane segment at 263–279 (YVFIINLIPLHVFVLLL) threads the bilayer. The Cytoplasmic segment spans residues 280–284 (MQRYS). A helical membrane pass occupies residues 285 to 310 (KRVYIAYSTFYIVGLILSMQIPFVGF). Residues 311 to 318 (QPIRTSEH) lie on the Lumenal side of the membrane. Residues 319–338 (MAAAGVFALLQAYAFLQYLR) form a helical membrane-spanning segment. Topologically, residues 339 to 347 (DRLTKQEFQ) are cytoplasmic. Residues 348–368 (TLFFLGVSLAAGAVFLSVIYL) traverse the membrane as a helical segment. Over 369-407 (TYTGYIAPWSGRFYSLWDTGYAKIHIPIIASVSEHQPTT) the chain is Lumenal. The short motif at 399–402 (SVSE) is the SVSE motif element. The helical transmembrane segment at 408 to 430 (WVSFFFDLHILVCTFPAGLWFCI) threads the bilayer. Topologically, residues 431-436 (KNINDE) are cytoplasmic. Residues 437-453 (RVFVALYAISAVYFAGV) form a helical membrane-spanning segment. Residues 454 to 457 (MVRL) lie on the Lumenal side of the membrane. Arg456 is a binding site for dolichyl diphosphooligosaccharide. The helical transmembrane segment at 458 to 479 (MLTLTPVVCMLSAIAFSNVFEH) threads the bilayer. Topologically, residues 480–523 (YLGDDMKRENPPVEDSSDEDDKRNPGNLYDKAGKVRKHVTEQEK) are cytoplasmic. The segment at 487 to 526 (RENPPVEDSSDEDDKRNPGNLYDKAGKVRKHVTEQEKPEE) is disordered. Phosphoserine is present on residues Ser495 and Ser496. The span at 517-526 (HVTEQEKPEE) shows a compositional bias: basic and acidic residues. Residues 524–549 (PEEGLGPNIKSIVTMLMLMLLMMFAV) traverse the membrane as a helical segment. Residues 550–823 (HCTWVTSNAY…KGKKTSKKTV (274 aa)) are Lumenal-facing. The tract at residues 601–603 (WWD) is interacts with target acceptor peptide in protein substrate. Positions 601–605 (WWDYG) match the WWDYG motif motif. Dolichyl diphosphooligosaccharide is bound at residue Tyr606. N-linked (GlcNAc...) asparagine glycans are attached at residues Asn613 and Asn620. N-linked (GlcNAc...) (high mannose) asparagine glycosylation occurs at Asn624. An N-linked (GlcNAc...) asparagine glycan is attached at Asn638. Residues 668-675 (DINKFLWM) carry the DK motif motif.

Belongs to the STT3 family. In terms of assembly, component of the oligosaccharyltransferase (OST) complex. There are 2 OST complexes, OST-A and OST-B, which contain STT3A or STT3B as catalytic subunit, respectively. OST-A and OST-B contain common core subunits RPN1, RPN2, OST48, OST4, DAD1 and TMEM258, and OST-B contains either MAGT1 or TUSC3 as specific accessory subunit. The cofactor is Mg(2+). It depends on Mn(2+) as a cofactor.

It is found in the endoplasmic reticulum membrane. It carries out the reaction a di-trans,poly-cis-dolichyl diphosphooligosaccharide + L-asparaginyl-[protein] = N(4)-(oligosaccharide-(1-&gt;4)-N-acetyl-beta-D-glucosaminyl-(1-&gt;4)-N-acetyl-beta-D-glucosaminyl)-L-asparaginyl-[protein] + a di-trans,poly-cis-dolichyl diphosphate + H(+). It functions in the pathway protein modification; protein glycosylation. Catalytic subunit of the oligosaccharyl transferase (OST) complex that catalyzes the initial transfer of a defined glycan (Glc(3)Man(9)GlcNAc(2) in eukaryotes) from the lipid carrier dolichol-pyrophosphate to an asparagine residue within an Asn-X-Ser/Thr consensus motif in nascent polypeptide chains, the first step in protein N-glycosylation. N-glycosylation occurs cotranslationally and the complex associates with the Sec61 complex at the channel-forming translocon complex that mediates protein translocation across the endoplasmic reticulum (ER). All subunits are required for a maximal enzyme activity. This subunit contains the active site and the acceptor peptide and donor lipid-linked oligosaccharide (LLO) binding pockets. STT3B is present in a small subset of OST complexes and mediates both cotranslational and post-translational N-glycosylation of target proteins: STT3B-containing complexes are required for efficient post-translational glycosylation and while they are less competent than STT3A-containing complexes for cotranslational glycosylation, they have the ability to mediate glycosylation of some nascent sites that are not accessible for STT3A. STT3B-containing complexes also act post-translationally and mediate modification of skipped glycosylation sites in unfolded proteins. Plays a role in ER-associated degradation (ERAD) pathway that mediates ubiquitin-dependent degradation of misfolded endoplasmic reticulum proteins by mediating N-glycosylation of unfolded proteins, which are then recognized by the ERAD pathway and targeted for degradation. The sequence is that of Dolichyl-diphosphooligosaccharide--protein glycosyltransferase subunit STT3B from Mus musculus (Mouse).